Here is a 454-residue protein sequence, read N- to C-terminus: 3-phosphoshikimate 1-carboxyvinyltransferase (454 aa).

Positions 39, 40, and 44 each coordinate 3-phosphoshikimate. Lys39 is a binding site for phosphoenolpyruvate. Phosphoenolpyruvate contacts are provided by Gly112 and Arg140. Residues Ser185, Gln187, Asp333, and Lys360 each contribute to the 3-phosphoshikimate site. Gln187 contacts phosphoenolpyruvate. The Proton acceptor role is filled by Asp333. Phosphoenolpyruvate is bound by residues Arg364 and Arg405.

Belongs to the EPSP synthase family. As to quaternary structure, monomer.

Its subcellular location is the cytoplasm. It catalyses the reaction 3-phosphoshikimate + phosphoenolpyruvate = 5-O-(1-carboxyvinyl)-3-phosphoshikimate + phosphate. It functions in the pathway metabolic intermediate biosynthesis; chorismate biosynthesis; chorismate from D-erythrose 4-phosphate and phosphoenolpyruvate: step 6/7. Catalyzes the transfer of the enolpyruvyl moiety of phosphoenolpyruvate (PEP) to the 5-hydroxyl of shikimate-3-phosphate (S3P) to produce enolpyruvyl shikimate-3-phosphate and inorganic phosphate. This is 3-phosphoshikimate 1-carboxyvinyltransferase from Xylella fastidiosa (strain 9a5c).